We begin with the raw amino-acid sequence, 331 residues long: Protein-methionine-sulfoxide reductase catalytic subunit MsrP (331 aa).

The segment at residues 1 to 54 (MLIKTDRWLRGDDIPASEITPQHLFDQRRRLLAAAALGAAGAALSPWAARRAFA) is a signal peptide (tat-type signal). Mo-molybdopterin contacts are provided by residues asparagine 86, 89 to 90 (YE), cysteine 144, serine 179, asparagine 227, arginine 232, and 243 to 245 (SAK).

The protein belongs to the MsrP family. Heterodimer of a catalytic subunit (MsrP) and a heme-binding subunit (MsrQ). Mo-molybdopterin serves as cofactor. Post-translationally, predicted to be exported by the Tat system. The position of the signal peptide cleavage has not been experimentally proven.

It localises to the periplasm. The enzyme catalyses L-methionyl-[protein] + a quinone + H2O = L-methionyl-(S)-S-oxide-[protein] + a quinol. It carries out the reaction L-methionyl-[protein] + a quinone + H2O = L-methionyl-(R)-S-oxide-[protein] + a quinol. Functionally, part of the MsrPQ system that repairs oxidized periplasmic proteins containing methionine sulfoxide residues (Met-O), using respiratory chain electrons. Thus protects these proteins from oxidative-stress damage caused by reactive species of oxygen and chlorine generated by the host defense mechanisms. MsrPQ is essential for the maintenance of envelope integrity under bleach stress, rescuing a wide series of structurally unrelated periplasmic proteins from methionine oxidation. The catalytic subunit MsrP is non-stereospecific, being able to reduce both (R-) and (S-) diastereoisomers of methionine sulfoxide. The sequence is that of Protein-methionine-sulfoxide reductase catalytic subunit MsrP from Ralstonia nicotianae (strain ATCC BAA-1114 / GMI1000) (Ralstonia solanacearum).